The sequence spans 358 residues: Phospho-N-acetylmuramoyl-pentapeptide-transferase (358 aa).

The next 10 membrane-spanning stretches (helical) occupy residues 19-39, 71-91, 95-115, 126-146, 166-186, 194-214, 237-257, 261-281, 286-306, and 336-356; these read YLTL…VLIG, TMGG…WADL, YVWV…IDDY, LIAR…ALYL, VMPQ…VGTS, GLDG…AIFA, LVIV…FNTY, VFMG…IAVL, IVLV…ILQV, and VIVR…ATLK.

It belongs to the glycosyltransferase 4 family. MraY subfamily. Mg(2+) serves as cofactor.

Its subcellular location is the cell inner membrane. The enzyme catalyses UDP-N-acetyl-alpha-D-muramoyl-L-alanyl-gamma-D-glutamyl-meso-2,6-diaminopimeloyl-D-alanyl-D-alanine + di-trans,octa-cis-undecaprenyl phosphate = di-trans,octa-cis-undecaprenyl diphospho-N-acetyl-alpha-D-muramoyl-L-alanyl-D-glutamyl-meso-2,6-diaminopimeloyl-D-alanyl-D-alanine + UMP. The protein operates within cell wall biogenesis; peptidoglycan biosynthesis. Catalyzes the initial step of the lipid cycle reactions in the biosynthesis of the cell wall peptidoglycan: transfers peptidoglycan precursor phospho-MurNAc-pentapeptide from UDP-MurNAc-pentapeptide onto the lipid carrier undecaprenyl phosphate, yielding undecaprenyl-pyrophosphoryl-MurNAc-pentapeptide, known as lipid I. This is Phospho-N-acetylmuramoyl-pentapeptide-transferase from Pseudoalteromonas atlantica (strain T6c / ATCC BAA-1087).